A 216-amino-acid polypeptide reads, in one-letter code: MIF4G domain-containing protein A (216 aa).

Residues 2-199 (DSAWTALDME…LEILEFRASG (198 aa)) form the MIF4G domain.

Belongs to the MIF4GD family. As to quaternary structure, interacts with eif4g1, eif4g2 and slbp; probably tethered by SLBP to the 3'-end of mRNAs ending with the histone stem-loop, it also interacts with eif4g1 which is bound to their 5'-end.

The protein localises to the cytoplasm. It is found in the nucleus. Functionally, functions in replication-dependent translation of histone mRNAs which differ from other eukaryotic mRNAs in that they do not end with a poly-A tail but a stem-loop. May participate in circularizing those mRNAs specifically enhancing their translation. This is MIF4G domain-containing protein A (mif4gda) from Danio rerio (Zebrafish).